We begin with the raw amino-acid sequence, 94 residues long: DNA-directed RNA polymerase subunit omega (94 aa).

Belongs to the RNA polymerase subunit omega family. In terms of assembly, the RNAP catalytic core consists of 2 alpha, 1 beta, 1 beta' and 1 omega subunit. When a sigma factor is associated with the core the holoenzyme is formed, which can initiate transcription.

The catalysed reaction is RNA(n) + a ribonucleoside 5'-triphosphate = RNA(n+1) + diphosphate. Functionally, promotes RNA polymerase assembly. Latches the N- and C-terminal regions of the beta' subunit thereby facilitating its interaction with the beta and alpha subunits. In Photobacterium profundum (strain SS9), this protein is DNA-directed RNA polymerase subunit omega.